Consider the following 879-residue polypeptide: Protein translocase subunit SecA (879 aa).

ATP is bound by residues Q86, 104–108 (GEGKT), and D500. Zn(2+) is bound by residues C863, C865, C874, and H875.

It belongs to the SecA family. In terms of assembly, monomer and homodimer. Part of the essential Sec protein translocation apparatus which comprises SecA, SecYEG and auxiliary proteins SecDF-YajC and YidC. Zn(2+) serves as cofactor.

It is found in the cell inner membrane. It localises to the cytoplasm. The catalysed reaction is ATP + H2O + cellular proteinSide 1 = ADP + phosphate + cellular proteinSide 2.. Part of the Sec protein translocase complex. Interacts with the SecYEG preprotein conducting channel. Has a central role in coupling the hydrolysis of ATP to the transfer of proteins into and across the cell membrane, serving both as a receptor for the preprotein-SecB complex and as an ATP-driven molecular motor driving the stepwise translocation of polypeptide chains across the membrane. The chain is Protein translocase subunit SecA from Orientia tsutsugamushi (strain Ikeda) (Rickettsia tsutsugamushi).